A 214-amino-acid polypeptide reads, in one-letter code: Adenylate kinase (214 aa).

An ATP-binding site is contributed by 10–15; sequence GAGKGT. Residues 30–59 are NMP; the sequence is STGDMLRAAVKAGTPLGLEAKKVMDAGQLV. AMP contacts are provided by residues Thr-31, Arg-36, 57 to 59, 85 to 88, and Gln-92; these read QLV and GFPR. Residues 122–159 are LID; it reads GRRVHPGSGRVYHVVFNPPKVEGKDDVTGEDLAIRPDD. Residues Arg-123 and 132–133 contribute to the ATP site; that span reads VY. Arg-156 and Arg-167 together coordinate AMP. Gln-200 provides a ligand contact to ATP.

This sequence belongs to the adenylate kinase family. In terms of assembly, monomer.

It is found in the cytoplasm. The catalysed reaction is AMP + ATP = 2 ADP. The protein operates within purine metabolism; AMP biosynthesis via salvage pathway; AMP from ADP: step 1/1. Its function is as follows. Catalyzes the reversible transfer of the terminal phosphate group between ATP and AMP. Plays an important role in cellular energy homeostasis and in adenine nucleotide metabolism. This chain is Adenylate kinase, found in Shewanella baltica (strain OS155 / ATCC BAA-1091).